We begin with the raw amino-acid sequence, 38 residues long: Toxin Lqh 8/6 (38 aa).

4 cysteine pairs are disulfide-bonded: Cys-2/Cys-19, Cys-5/Cys-28, Cys-16/Cys-33, and Cys-20/Cys-35.

In terms of tissue distribution, expressed by the venom gland.

Its subcellular location is the secreted. Functionally, toxin with unknown function in healthy organisms. On glioma cells, interacts with chloride channels (probably ClC-3/CLCN3) and MMP2 at the surface of glioma cells. This complex is then internalized via caveolae, thus inhibiting the chloride channels necessary for cell shrinkage and tumor propagation. The chain is Toxin Lqh 8/6 from Leiurus hebraeus (Hebrew deathstalker scorpion).